Reading from the N-terminus, the 252-residue chain is Phosphate import ATP-binding protein PstB (252 aa).

The 242-residue stretch at 6 to 247 (ITINNLNFYY…PRDKRTEDYI (242 aa)) folds into the ABC transporter domain. 38 to 45 (GPSGCGKS) serves as a coordination point for ATP.

The protein belongs to the ABC transporter superfamily. Phosphate importer (TC 3.A.1.7) family. The complex is composed of two ATP-binding proteins (PstB), two transmembrane proteins (PstC and PstA) and a solute-binding protein (PstS).

It localises to the cell membrane. It catalyses the reaction phosphate(out) + ATP + H2O = ADP + 2 phosphate(in) + H(+). Part of the ABC transporter complex PstSACB involved in phosphate import. Responsible for energy coupling to the transport system. This Moorella thermoacetica (strain ATCC 39073 / JCM 9320) protein is Phosphate import ATP-binding protein PstB.